The chain runs to 1013 residues: Alpha-2-macroglobulin homolog (1013 aa).

Residues 804-844 (AQRGANGERDGLRETVPVRPAGARQLLSGSGSVGADKAGGN) form a disordered region.

This sequence belongs to the protease inhibitor I39 (alpha-2-macroglobulin) family. Bacterial alpha-2-macroglobulin subfamily.

The polypeptide is Alpha-2-macroglobulin homolog (Deinococcus radiodurans (strain ATCC 13939 / DSM 20539 / JCM 16871 / CCUG 27074 / LMG 4051 / NBRC 15346 / NCIMB 9279 / VKM B-1422 / R1)).